Consider the following 155-residue polypeptide: Large ribosomal subunit protein eL19 (155 aa).

Over residues 66 to 84 (VRHLQRRKGRRRGMGRRKG) the composition is skewed to basic residues. A disordered region spans residues 66-85 (VRHLQRRKGRRRGMGRRKGV).

This sequence belongs to the eukaryotic ribosomal protein eL19 family. As to quaternary structure, part of the 50S ribosomal subunit.

Binds to the 23S rRNA. The sequence is that of Large ribosomal subunit protein eL19 from Aeropyrum pernix (strain ATCC 700893 / DSM 11879 / JCM 9820 / NBRC 100138 / K1).